The chain runs to 313 residues: Ribosomal RNA small subunit methyltransferase H (313 aa).

S-adenosyl-L-methionine-binding positions include 36–38 (GGH), Asp56, Phe80, Asp102, and Gln109.

It belongs to the methyltransferase superfamily. RsmH family.

The protein resides in the cytoplasm. The catalysed reaction is cytidine(1402) in 16S rRNA + S-adenosyl-L-methionine = N(4)-methylcytidine(1402) in 16S rRNA + S-adenosyl-L-homocysteine + H(+). Functionally, specifically methylates the N4 position of cytidine in position 1402 (C1402) of 16S rRNA. The chain is Ribosomal RNA small subunit methyltransferase H from Haemophilus ducreyi (strain 35000HP / ATCC 700724).